A 275-amino-acid chain; its full sequence is Phosphatidylglycerol--prolipoprotein diacylglyceryl transferase (275 aa).

4 helical membrane-spanning segments follow: residues 20–40, 58–78, 88–108, and 118–138; these read FTIH…LLLA, LLWA…VFQW, IIAI…GFIV, and LSSW…QGIG. Arg-139 contacts a 1,2-diacyl-sn-glycero-3-phospho-(1'-sn-glycerol). The next 2 helical transmembrane spans lie at 209–229 and 239–259; these read GEIF…IEGM and IRIS…ILII.

It belongs to the Lgt family.

The protein resides in the cell membrane. It carries out the reaction L-cysteinyl-[prolipoprotein] + a 1,2-diacyl-sn-glycero-3-phospho-(1'-sn-glycerol) = an S-1,2-diacyl-sn-glyceryl-L-cysteinyl-[prolipoprotein] + sn-glycerol 1-phosphate + H(+). It participates in protein modification; lipoprotein biosynthesis (diacylglyceryl transfer). In terms of biological role, catalyzes the transfer of the diacylglyceryl group from phosphatidylglycerol to the sulfhydryl group of the N-terminal cysteine of a prolipoprotein, the first step in the formation of mature lipoproteins. In Limosilactobacillus reuteri (strain DSM 20016) (Lactobacillus reuteri), this protein is Phosphatidylglycerol--prolipoprotein diacylglyceryl transferase.